The primary structure comprises 829 residues: Exocyst complex component SEC10b (829 aa).

Residues 244-266 (RGLEVAVANLQDYCNELENRLLS) are a coiled coil.

It belongs to the SEC10 family. The exocyst complex is composed of SEC3, SEC5, SEC6, SEC8, SEC10, EXO70A1 and EXO84B. Interacts with EXO84B. Binds to EXO70E2. Expressed in seedlings, roots, leaves and flowers.

It is found in the cytoplasm. The protein resides in the cytosol. The protein localises to the secreted. Its subcellular location is the extracellular exosome. Functionally, component of the exocyst complex involved in the docking of exocytic vesicles with fusion sites on the plasma membrane during regulated or polarized secretion. Involved in polarized cell growth and organ morphogenesis. During cytokinesis, involved in cell plate initiation, cell plate maturation and formation of new primary cell wall. The sequence is that of Exocyst complex component SEC10b from Arabidopsis thaliana (Mouse-ear cress).